Here is a 396-residue protein sequence, read N- to C-terminus: MSRPQRISVLGATGSIGLSTLDVVQRHPDRYEAFALTGFSRLAELEALCLRHRPVYAVVPEQAAAIALQGSLAAAGIRTRVLFGEQALCEVASAPEVDMVMAAIVGAAGLPSTLAAVEAGKRVLLANKEALVMSGALFMQAVKRSGAVLLPIDSEHNAIFQSLPRNYADGLERVGVRRILLTASGGPFRETPLEQLASVTPEQACAHPNWSMGRKISVDSASMMNKGLELIEACWLFDAQPSQVEVVIHPQSVIHSMVDYVDGSVIAQLGNPDMRTPISYAMAWPERIESGVAPLDMFAVGRLDFQRPDEQRFPCLRLARQAAETGGSAPAMLNAANEVAVAAFLERHIRFSDIAVIIEDVLNREAVTAVESLDQVLAADRRARSVAGQWLTRYAG.

Threonine 13, glycine 14, serine 15, isoleucine 16, and asparagine 127 together coordinate NADPH. A 1-deoxy-D-xylulose 5-phosphate-binding site is contributed by lysine 128. Glutamate 129 lines the NADPH pocket. Residue aspartate 153 coordinates Mn(2+). 4 residues coordinate 1-deoxy-D-xylulose 5-phosphate: serine 154, glutamate 155, serine 184, and histidine 207. Position 155 (glutamate 155) interacts with Mn(2+). Position 213 (glycine 213) interacts with NADPH. Residues serine 220, asparagine 225, lysine 226, and glutamate 229 each coordinate 1-deoxy-D-xylulose 5-phosphate. Glutamate 229 contributes to the Mn(2+) binding site.

It belongs to the DXR family. It depends on Mg(2+) as a cofactor. The cofactor is Mn(2+).

The catalysed reaction is 2-C-methyl-D-erythritol 4-phosphate + NADP(+) = 1-deoxy-D-xylulose 5-phosphate + NADPH + H(+). It functions in the pathway isoprenoid biosynthesis; isopentenyl diphosphate biosynthesis via DXP pathway; isopentenyl diphosphate from 1-deoxy-D-xylulose 5-phosphate: step 1/6. Its function is as follows. Catalyzes the NADPH-dependent rearrangement and reduction of 1-deoxy-D-xylulose-5-phosphate (DXP) to 2-C-methyl-D-erythritol 4-phosphate (MEP). The protein is 1-deoxy-D-xylulose 5-phosphate reductoisomerase of Pseudomonas paraeruginosa (strain DSM 24068 / PA7) (Pseudomonas aeruginosa (strain PA7)).